The primary structure comprises 185 residues: Elongation factor P (185 aa).

The protein belongs to the elongation factor P family.

The protein resides in the cytoplasm. It functions in the pathway protein biosynthesis; polypeptide chain elongation. Involved in peptide bond synthesis. Stimulates efficient translation and peptide-bond synthesis on native or reconstituted 70S ribosomes in vitro. Probably functions indirectly by altering the affinity of the ribosome for aminoacyl-tRNA, thus increasing their reactivity as acceptors for peptidyl transferase. The chain is Elongation factor P from Caldicellulosiruptor bescii (strain ATCC BAA-1888 / DSM 6725 / KCTC 15123 / Z-1320) (Anaerocellum thermophilum).